The chain runs to 352 residues: Cyclin-dependent kinase-like 1 (352 aa).

Residues 4–287 enclose the Protein kinase domain; that stretch reads YEKIGKIGEG…CEQLLQHPYF (284 aa). ATP is bound by residues 10–18 and K33; that span reads IGEGSYGVV. The [NKR]KIAxRE motif lies at 45–51; the sequence is KKIALRE. D126 serves as the catalytic Proton acceptor.

The protein belongs to the protein kinase superfamily. CMGC Ser/Thr protein kinase family. CDC2/CDKX subfamily.

It is found in the cytoplasm. Its subcellular location is the nucleus. The catalysed reaction is L-seryl-[protein] + ATP = O-phospho-L-seryl-[protein] + ADP + H(+). The enzyme catalyses L-threonyl-[protein] + ATP = O-phospho-L-threonyl-[protein] + ADP + H(+). This chain is Cyclin-dependent kinase-like 1, found in Rattus norvegicus (Rat).